Here is a 23-residue protein sequence, read N- to C-terminus: Septenin 2a (23 aa).

Expressed in skin glands.

It localises to the secreted. Functionally, may act as an antimicrobial peptide. The protein is Septenin 2a of Osteopilus septentrionalis (Cuban treefrog).